Reading from the N-terminus, the 182-residue chain is Ribosome-recycling factor (182 aa).

The protein belongs to the RRF family.

It is found in the cytoplasm. In terms of biological role, responsible for the release of ribosomes from messenger RNA at the termination of protein biosynthesis. May increase the efficiency of translation by recycling ribosomes from one round of translation to another. The sequence is that of Ribosome-recycling factor from Nostoc sp. (strain PCC 7120 / SAG 25.82 / UTEX 2576).